The primary structure comprises 231 residues: Ribosomal RNA small subunit methyltransferase G (231 aa).

S-adenosyl-L-methionine-binding positions include G75, F80, 126–127, and R142; that span reads AE.

This sequence belongs to the methyltransferase superfamily. RNA methyltransferase RsmG family.

It localises to the cytoplasm. In terms of biological role, specifically methylates the N7 position of a guanine in 16S rRNA. This is Ribosomal RNA small subunit methyltransferase G from Mycoplasma capricolum subsp. capricolum (strain California kid / ATCC 27343 / NCTC 10154).